Here is a 231-residue protein sequence, read N- to C-terminus: 5'-methylthioadenosine/S-adenosylhomocysteine nucleosidase (231 aa).

The Proton acceptor role is filled by Glu-12. Substrate is bound by residues Gly-78, Val-153, and 174–175 (ME). Catalysis depends on Asp-198, which acts as the Proton donor.

This sequence belongs to the PNP/UDP phosphorylase family. MtnN subfamily.

It carries out the reaction S-adenosyl-L-homocysteine + H2O = S-(5-deoxy-D-ribos-5-yl)-L-homocysteine + adenine. The enzyme catalyses S-methyl-5'-thioadenosine + H2O = 5-(methylsulfanyl)-D-ribose + adenine. It catalyses the reaction 5'-deoxyadenosine + H2O = 5-deoxy-D-ribose + adenine. It functions in the pathway amino-acid biosynthesis; L-methionine biosynthesis via salvage pathway; S-methyl-5-thio-alpha-D-ribose 1-phosphate from S-methyl-5'-thioadenosine (hydrolase route): step 1/2. Catalyzes the irreversible cleavage of the glycosidic bond in both 5'-methylthioadenosine (MTA) and S-adenosylhomocysteine (SAH/AdoHcy) to adenine and the corresponding thioribose, 5'-methylthioribose and S-ribosylhomocysteine, respectively. Also cleaves 5'-deoxyadenosine, a toxic by-product of radical S-adenosylmethionine (SAM) enzymes, into 5-deoxyribose and adenine. This chain is 5'-methylthioadenosine/S-adenosylhomocysteine nucleosidase, found in Vibrio parahaemolyticus serotype O3:K6 (strain RIMD 2210633).